The following is a 58-amino-acid chain: Large ribosomal subunit protein bL32c (58 aa).

Residues 1-23 form a disordered region; sequence MAVPKKRTSKAKKNARKSVWKKK.

This sequence belongs to the bacterial ribosomal protein bL32 family.

It is found in the plastid. Its subcellular location is the chloroplast. This is Large ribosomal subunit protein bL32c (rpl32-A) from Trieres chinensis (Marine centric diatom).